A 426-amino-acid polypeptide reads, in one-letter code: D-tagatose-1,6-bisphosphate aldolase subunit KbaZ (426 aa).

It belongs to the GatZ/KbaZ family. KbaZ subfamily. In terms of assembly, forms a complex with KbaY.

Its pathway is carbohydrate metabolism; D-tagatose 6-phosphate degradation; D-glyceraldehyde 3-phosphate and glycerone phosphate from D-tagatose 6-phosphate: step 2/2. Its function is as follows. Component of the tagatose-1,6-bisphosphate aldolase KbaYZ that is required for full activity and stability of the Y subunit. Could have a chaperone-like function for the proper and stable folding of KbaY. When expressed alone, KbaZ does not show any aldolase activity. The protein is D-tagatose-1,6-bisphosphate aldolase subunit KbaZ of Escherichia coli O6:K15:H31 (strain 536 / UPEC).